Reading from the N-terminus, the 141-residue chain is Large ribosomal subunit protein uL11 (141 aa).

This sequence belongs to the universal ribosomal protein uL11 family. In terms of assembly, part of the ribosomal stalk of the 50S ribosomal subunit. Interacts with L10 and the large rRNA to form the base of the stalk. L10 forms an elongated spine to which L12 dimers bind in a sequential fashion forming a multimeric L10(L12)X complex. One or more lysine residues are methylated.

Its function is as follows. Forms part of the ribosomal stalk which helps the ribosome interact with GTP-bound translation factors. This Clostridium botulinum (strain Alaska E43 / Type E3) protein is Large ribosomal subunit protein uL11.